Reading from the N-terminus, the 179-residue chain is Large ribosomal subunit protein uL5 (179 aa).

It belongs to the universal ribosomal protein uL5 family. Part of the 50S ribosomal subunit; part of the 5S rRNA/L5/L18/L25 subcomplex. Contacts the 5S rRNA and the P site tRNA. Forms a bridge to the 30S subunit in the 70S ribosome.

In terms of biological role, this is one of the proteins that bind and probably mediate the attachment of the 5S RNA into the large ribosomal subunit, where it forms part of the central protuberance. In the 70S ribosome it contacts protein S13 of the 30S subunit (bridge B1b), connecting the 2 subunits; this bridge is implicated in subunit movement. Contacts the P site tRNA; the 5S rRNA and some of its associated proteins might help stabilize positioning of ribosome-bound tRNAs. The sequence is that of Large ribosomal subunit protein uL5 from Francisella tularensis subsp. novicida (strain U112).